A 147-amino-acid polypeptide reads, in one-letter code: Interleukin-4 (147 aa).

An N-terminal signal peptide occupies residues 1 to 19 (MGLRPQLAAILLCLLACTG). 4 N-linked (GlcNAc...) asparagine glycosylation sites follow: Asn20, Asn61, Asn90, and Asn117. 2 disulfide bridges follow: Cys47–Cys87 and Cys69–Cys114.

It belongs to the IL-4/IL-13 family.

It localises to the secreted. In terms of biological role, participates in at least several B-cell activation processes as well as of other cell types. It is a costimulator of DNA-synthesis. It induces the expression of class II MHC molecules on resting B-cells. It enhances both secretion and cell surface expression of IgE and IgG1. It also regulates the expression of the low affinity Fc receptor for IgE (CD23) on both lymphocytes and monocytes. Positively regulates IL31RA expression in macrophages. Stimulates autophagy in dendritic cells by interfering with mTORC1 signaling and through the induction of RUFY4. This is Interleukin-4 (IL4) from Mesocricetus auratus (Golden hamster).